A 433-amino-acid polypeptide reads, in one-letter code: Histidinol dehydrogenase (433 aa).

NAD(+) contacts are provided by tyrosine 129, glutamine 191, and asparagine 214. Residues serine 237, glutamine 259, and histidine 262 each coordinate substrate. Positions 259 and 262 each coordinate Zn(2+). Residues glutamate 326 and histidine 327 each act as proton acceptor in the active site. The substrate site is built by histidine 327, aspartate 360, glutamate 414, and histidine 419. Aspartate 360 lines the Zn(2+) pocket. Histidine 419 contacts Zn(2+).

This sequence belongs to the histidinol dehydrogenase family. The cofactor is Zn(2+).

It catalyses the reaction L-histidinol + 2 NAD(+) + H2O = L-histidine + 2 NADH + 3 H(+). Its pathway is amino-acid biosynthesis; L-histidine biosynthesis; L-histidine from 5-phospho-alpha-D-ribose 1-diphosphate: step 9/9. In terms of biological role, catalyzes the sequential NAD-dependent oxidations of L-histidinol to L-histidinaldehyde and then to L-histidine. In Methanosarcina mazei (strain ATCC BAA-159 / DSM 3647 / Goe1 / Go1 / JCM 11833 / OCM 88) (Methanosarcina frisia), this protein is Histidinol dehydrogenase.